Consider the following 93-residue polypeptide: Small ribosomal subunit protein uS19c (93 aa).

Belongs to the universal ribosomal protein uS19 family.

The protein resides in the plastid. It localises to the chloroplast. Protein S19 forms a complex with S13 that binds strongly to the 16S ribosomal RNA. This Brachypodium distachyon (Purple false brome) protein is Small ribosomal subunit protein uS19c.